A 299-amino-acid polypeptide reads, in one-letter code: Regucalcin (299 aa).

Glu-18 contributes to the a divalent metal cation binding site. Substrate is bound by residues Arg-101, Asn-103, and Glu-121. Lys-144 is subject to N6-succinyllysine. The a divalent metal cation site is built by Asn-154 and Asp-204. The active-site Proton donor/acceptor is the Asp-204. N6-succinyllysine is present on residues Lys-244 and Lys-253.

Belongs to the SMP-30/CGR1 family. As to quaternary structure, monomer. Requires Zn(2+) as cofactor. It depends on Mn(2+) as a cofactor. The cofactor is Ca(2+). Mg(2+) is required as a cofactor.

The protein resides in the cytoplasm. It catalyses the reaction D-glucono-1,5-lactone + H2O = D-gluconate + H(+). Functionally, gluconolactonase with low activity towards other sugar lactones, including gulonolactone and galactonolactone. Can also hydrolyze diisopropyl phosphorofluoridate and phenylacetate (in vitro). Calcium-binding protein. Modulates Ca(2+) signaling, and Ca(2+)-dependent cellular processes and enzyme activities. This chain is Regucalcin (RGN), found in Pongo abelii (Sumatran orangutan).